A 438-amino-acid chain; its full sequence is Thymidine phosphorylase (438 aa).

Belongs to the thymidine/pyrimidine-nucleoside phosphorylase family. Homodimer.

The catalysed reaction is thymidine + phosphate = 2-deoxy-alpha-D-ribose 1-phosphate + thymine. It functions in the pathway pyrimidine metabolism; dTMP biosynthesis via salvage pathway; dTMP from thymine: step 1/2. The enzymes which catalyze the reversible phosphorolysis of pyrimidine nucleosides are involved in the degradation of these compounds and in their utilization as carbon and energy sources, or in the rescue of pyrimidine bases for nucleotide synthesis. This chain is Thymidine phosphorylase, found in Burkholderia cenocepacia (strain ATCC BAA-245 / DSM 16553 / LMG 16656 / NCTC 13227 / J2315 / CF5610) (Burkholderia cepacia (strain J2315)).